The chain runs to 294 residues: uncharacterized protein (294 aa).

Disordered stretches follow at residues 1–30, 51–86, and 250–294; these read MKRQ…EVSH, ALSD…KKRP, and DELN…STST. Composition is skewed to polar residues over residues 7–26, 66–81, and 255–277; these read QDSM…TPTK, PYSS…NSST, and PMNN…NLPT.

It localises to the nucleus. This is an uncharacterized protein from Schizosaccharomyces pombe (strain 972 / ATCC 24843) (Fission yeast).